Here is a 244-residue protein sequence, read N- to C-terminus: METFPHVFQYPFAVLQQQESGFPLRGRWHTDFFHNDHPIVLELGCGRGEYTVGLGKRFPEKNFIGIDIKGARMWAGAKESLQEGMSNVAFLRTDIELLDRFFAEGEVAEIWITFPDPQMKKVGKRLTGTRFLSLYDKVLERGGRIHLKTDSPFLYTYTKALVELNGLPVHEITDDLYGKGCVENEILGIRTYYEQQWLERGLTIKYISFGLGEPDCEYREPDIEIEPDSYRSYNRSRRSQAVPS.

Residues E42, D67, D94, and D116 each contribute to the S-adenosyl-L-methionine site. The active site involves D116. Substrate is bound by residues K120, D150, and 191-194 (TYYE).

The protein belongs to the class I-like SAM-binding methyltransferase superfamily. TrmB family.

The catalysed reaction is guanosine(46) in tRNA + S-adenosyl-L-methionine = N(7)-methylguanosine(46) in tRNA + S-adenosyl-L-homocysteine. It participates in tRNA modification; N(7)-methylguanine-tRNA biosynthesis. In terms of biological role, catalyzes the formation of N(7)-methylguanine at position 46 (m7G46) in tRNA. The sequence is that of tRNA (guanine-N(7)-)-methyltransferase from Porphyromonas gingivalis (strain ATCC BAA-308 / W83).